The following is a 445-amino-acid chain: O-fucosyltransferase 23 (445 aa).

A helical; Signal-anchor for type II membrane protein membrane pass occupies residues 12–34 (IFSKSVACKCLVLVGIALFYRAL). Asn97 and Asn179 each carry an N-linked (GlcNAc...) asparagine glycan. 258–260 (HMR) is a substrate binding site. N-linked (GlcNAc...) asparagine glycosylation occurs at Asn294. Residue 374–375 (TF) participates in substrate binding. A glycan (N-linked (GlcNAc...) asparagine) is linked at Asn424.

It belongs to the glycosyltransferase GT106 family. Expressed in dry pollen grains and germinating pollen grains.

It localises to the golgi apparatus membrane. Its pathway is glycan metabolism. Probable protein O-fucosyltransferase required for correct pollen tube penetration through the stigma-style interface. May be involved in protein O-glycosylation events during pollen-pistil interactions. This is O-fucosyltransferase 23 from Arabidopsis thaliana (Mouse-ear cress).